A 735-amino-acid polypeptide reads, in one-letter code: Probable E3 ubiquitin-protein ligase MID2 (735 aa).

The RING-type zinc finger occupies 30–80 (CPICLELFEDPLLLPCAHSLCFSCAHRILVSSCSSGESIEPITAFQCPTCR). Residues 137 to 184 (IACQFCEQDPPRDAVKTCITCEVSYCDRCLRATHPNKKPFTSHRLVEP) form a B box-type 1; degenerate zinc finger. The B box-type 2 zinc finger occupies 190–232 (LRGITCLDHENEKVNMYCVSDDQLICALCKLVGRHRDHQVASL). Zn(2+) is bound by residues Cys-195, His-198, Cys-218, and His-224. A coiled-coil region spans residues 233 to 301 (NDRFEKLKQT…IIQQRKQMIA (69 aa)). Residues 340 to 399 (LKENDQARFLQSAKNIAERVAMATASSQVLIPDINFNDAFENFALDFSREKKLLEGLDYL) enclose the COS domain. Residues 398 to 531 (YLTAPNPPSI…RNSEPTRLKT (134 aa)) form the Fibronectin type-III domain. The B30.2/SPRY domain maps to 516 to 709 (INQAGSRNSE…ILSGLPAPDF (194 aa)).

It belongs to the TRIM/RBCC family. As to quaternary structure, homodimer or heterodimer with MID1. Interacts with IGBP1. Post-translationally, phosphorylated on serine and threonine residues. In terms of tissue distribution, low level in fetal kidney and lung, and in adult prostate, ovary and small intestine.

It is found in the cytoplasm. It localises to the cytoskeleton. The catalysed reaction is S-ubiquitinyl-[E2 ubiquitin-conjugating enzyme]-L-cysteine + [acceptor protein]-L-lysine = [E2 ubiquitin-conjugating enzyme]-L-cysteine + N(6)-ubiquitinyl-[acceptor protein]-L-lysine.. It participates in protein modification; protein ubiquitination. E3 ubiquitin ligase that plays a role in microtubule stabilization. Mediates the 'Lys-48'-linked polyubiquitination of LRRK2 to drive its localization to microtubules and its proteasomal degradation in neurons. This ubiquitination inhibits LRRK2 kinase activation by RAB29. The protein is Probable E3 ubiquitin-protein ligase MID2 (MID2) of Homo sapiens (Human).